The primary structure comprises 175 residues: Transcriptional repressor NrdR (175 aa).

A zinc finger lies at 3-32 (CPYCSHPDSKVIDSRDVDDGVRRRRECVVC). The region spanning 47-137 (LFVVKKDQRR…VYREFTDITQ (91 aa)) is the ATP-cone domain.

Belongs to the NrdR family. It depends on Zn(2+) as a cofactor.

Negatively regulates transcription of bacterial ribonucleotide reductase nrd genes and operons by binding to NrdR-boxes. The chain is Transcriptional repressor NrdR from Dehalococcoides mccartyi (strain ATCC BAA-2100 / JCM 16839 / KCTC 5957 / BAV1).